A 505-amino-acid chain; its full sequence is MNEEGCVPHNSDVVKQKSIDQRAPLSGEPKCVICSRYGEYICDETNDDVCSLECKQALLRRVDSARVFPATDECFYVRDPGSSSHDAQLLRRKLDIHVQGQGSAVPPPVLTFTSCGLPPKLLLNLETAGYDFPTPIQMQAIPAALTGKSLLASADTGSGKTASFLVPIISRCTTYHSEHPSDQRRNPLAMVLAPTRELCVQVEDQAKMLGKGLPFKTALVVGGDPMSGQLYRIQQGVELIIGTPGRVVDLLSKHTIELDNIMTFVLDEVDCMLQRGFRDQVMQIFQALSQPQVLLFSATISREVEKVGGSLAKEIILVSIGNPNKPNKAVNQLAIWVDAKQKKQKLFDILRSQNHFKPPAVVYVSSRVGADLLANAITVVTGVKALSIHGEKPMKERRDVMGSFLGGEVPVLVSTGVLGRGVDLLVVRQVIVFDMPSTIKEYIHVIGRASRMGEKGTAIVFVNEDDRNLFPDLVAALKSSGAAIPKELINLTSREMHNKKRRVGY.

The HIT-type zinc finger occupies 27-56 (GEPKCVICSRYGEYICDETNDDVCSLECKQ). The short motif at 110-138 (LTFTSCGLPPKLLLNLETAGYDFPTPIQM) is the Q motif element. The Helicase ATP-binding domain maps to 141 to 318 (IPAALTGKSL…GSLAKEIILV (178 aa)). Residue 154 to 161 (ADTGSGKT) coordinates ATP. The DEAD box signature appears at 267-270 (DEVD). One can recognise a Helicase C-terminal domain in the interval 342–492 (KKQKLFDILR…AIPKELINLT (151 aa)).

This sequence belongs to the DEAD box helicase family. DDX59 subfamily.

The catalysed reaction is ATP + H2O = ADP + phosphate + H(+). This chain is DEAD-box ATP-dependent RNA helicase 41 (RH41), found in Arabidopsis thaliana (Mouse-ear cress).